Reading from the N-terminus, the 679-residue chain is Sodium-dependent phosphate transporter 1 (679 aa).

The next 6 helical transmembrane spans lie at 21–41 (YLWM…SVGA), 62–82 (ACIL…AKVS), 100–120 (GLLM…QLVA), 158–178 (IVMS…ILFF), 203–223 (ACTV…LLGF), and 230–250 (GTIL…WFFV). 2 positions are modified to phosphoserine: Ser265 and Ser269. The next 4 helical transmembrane spans lie at 511–531 (VSLL…FAHG), 558–578 (VATP…GLWV), 600–620 (FSIE…GLPI), and 650–670 (IFMA…AIMA). The a stretch occupies residues 550–558 (DTGDVSSKV).

The protein belongs to the inorganic phosphate transporter (PiT) (TC 2.A.20) family. As to expression, ubiquitously expressed.

Its subcellular location is the cell membrane. The enzyme catalyses 2 Na(+)(out) + phosphate(out) = 2 Na(+)(in) + phosphate(in). Functionally, sodium-phosphate symporter which preferentially transports the monovalent form of phosphate with a stoichiometry of two sodium ions per phosphate ion. May play a role in extracellular matrix and cartilage calcification as well as in vascular calcification. Essential for cell proliferation but this function is independent of its phosphate transporter activity. Its function is as follows. (Microbial infection) May function as a retroviral receptor as it confers human cells susceptibility to infection to Gibbon Ape Leukemia Virus (GaLV), Simian sarcoma-associated virus (SSAV) and Feline leukemia virus subgroup B (FeLV-B) as well as 10A1 murine leukemia virus (10A1 MLV). This is Sodium-dependent phosphate transporter 1 (SLC20A1) from Homo sapiens (Human).